The primary structure comprises 75 residues: uncharacterized protein (75 aa).

Residues 4-26 form a helical membrane-spanning segment; the sequence is PSLLFLGFSGVLAFGEVGWVGVY.

Its subcellular location is the membrane. This is an uncharacterized protein from Treponema pallidum (strain Nichols).